Reading from the N-terminus, the 283-residue chain is MESGGQYENGRYKPDYYKGTQSVNVMPKKEQHNALVMNKKIISILAERDAAVKERNEAVAATKEALASRDEALEQRDKALSERDNAIMETESALNALRYRENNLNYILSCAKRGGSQRFITEESHLPNPSPISTIPPEAANTRPTKRKKESKQGKKMGEDLNRPVASPGKKSRKDWDSNDVLVTFDEMTMPVPMCTCTGTARQCYKWGNGGWQSSCCTTTLSEYPLPQMPNKRHSRVGGRKMSGSVFSRLLSRLAGEGHELSSPVDLKNYWARHGTNRYITIK.

The segment at 51 to 86 is alanine-zipper; that stretch reads AVKERNEAVAATKEALASRDEALEQRDKALSERDNA. Residues 63–89 are a coiled coil; it reads KEALASRDEALEQRDKALSERDNAIME. Residues 122-176 form a disordered region; that stretch reads EESHLPNPSPISTIPPEAANTRPTKRKKESKQGKKMGEDLNRPVASPGKKSRKDW. Over residues 151–162 the composition is skewed to basic and acidic residues; it reads SKQGKKMGEDLN.

The protein belongs to the BBR/BPC family. Homodimer. Heterodimer. As to expression, expressed in seedlings, leaves and pistils.

The protein resides in the nucleus. Functionally, transcriptional regulator that specifically binds to GA-rich elements (GAGA-repeats) present in regulatory sequences of genes involved in developmental processes. This Arabidopsis thaliana (Mouse-ear cress) protein is Protein BASIC PENTACYSTEINE5 (BPC5).